Here is a 286-residue protein sequence, read N- to C-terminus: 4-hydroxybenzoate octaprenyltransferase (286 aa).

The next 9 helical transmembrane spans lie at 19–39 (AGWL…SHGF), 42–62 (WHLL…GCCV), 92–112 (ALVL…TTNA), 115–135 (IAWS…KRYV), 137–157 (MPQA…FAAV), 161–181 (VPLL…AYDT), 206–226 (FDVA…ALAL), 233–253 (AIYW…GWLI), and 264–284 (AFRL…LSYL).

It belongs to the UbiA prenyltransferase family. Mg(2+) serves as cofactor.

It is found in the cell inner membrane. It carries out the reaction all-trans-octaprenyl diphosphate + 4-hydroxybenzoate = 4-hydroxy-3-(all-trans-octaprenyl)benzoate + diphosphate. It participates in cofactor biosynthesis; ubiquinone biosynthesis. In terms of biological role, catalyzes the prenylation of para-hydroxybenzoate (PHB) with an all-trans polyprenyl group. Mediates the second step in the final reaction sequence of ubiquinone-8 (UQ-8) biosynthesis, which is the condensation of the polyisoprenoid side chain with PHB, generating the first membrane-bound Q intermediate 3-octaprenyl-4-hydroxybenzoate. The sequence is that of 4-hydroxybenzoate octaprenyltransferase from Polaromonas sp. (strain JS666 / ATCC BAA-500).